We begin with the raw amino-acid sequence, 280 residues long: UDP-3-O-acyl-N-acetylglucosamine deacetylase (280 aa).

Zn(2+) is bound by residues His-77, His-238, and Asp-242. The active-site Proton donor is the His-265.

Belongs to the LpxC family. The cofactor is Zn(2+).

It carries out the reaction a UDP-3-O-[(3R)-3-hydroxyacyl]-N-acetyl-alpha-D-glucosamine + H2O = a UDP-3-O-[(3R)-3-hydroxyacyl]-alpha-D-glucosamine + acetate. The protein operates within glycolipid biosynthesis; lipid IV(A) biosynthesis; lipid IV(A) from (3R)-3-hydroxytetradecanoyl-[acyl-carrier-protein] and UDP-N-acetyl-alpha-D-glucosamine: step 2/6. Its function is as follows. Catalyzes the hydrolysis of UDP-3-O-myristoyl-N-acetylglucosamine to form UDP-3-O-myristoylglucosamine and acetate, the committed step in lipid A biosynthesis. This Trichormus variabilis (strain ATCC 29413 / PCC 7937) (Anabaena variabilis) protein is UDP-3-O-acyl-N-acetylglucosamine deacetylase.